Here is a 701-residue protein sequence, read N- to C-terminus: MDPTSKSGLNQVSDVVFVIEGTANLGPYFESLRNNYILPTIEYFNGGPPAETDFGGDYGGTQYGLVVFNTVDCAPESYVQCHAPTSSAFEFVSWIDSIQFMGGGAESCSLIAEGLSVALQLFDDFKKMREQIGQTHKVCVLLCNSPPYLLPAVESVSYTGCTADSLVQIIRDRGIHFSVIAPRKLPALRSLFERASSVAGLPESSHPDYSQDPFHMVLVRGIALPVAPGGGSVPVSLKPVLPPQSLPVNQNPLVPVASTAPQMNTFQNVSLHAAHDAAQKALEEAANQQQKNRFGQISTPPFSQSPVLPPGGKPSLSTVTTVSPPVLTQQQVPPQQPQQQTQVPQPGLPAVNQQPPQASQQQPNNQQTPPPTQPGMAAVPAPPPGAQQGVANKVVAWSGVLEWQEKPKASSMDSNTKLTRSLPCQVQVSQGENLNTDQWPQKLIMQLIPQQLLTTLGPLFRNSRMVQFLFTNKDMESLKGLFRIMTSGFAGCVHFPHSAPCEVRVLMLLYSSRKRIFMGLIPNDQSGFVNGIRQVITNHKQVQQQRSMQPGQVQPNQNFLNRPPGPIPVTHGNVPQQLRAAATGNQQAPVTGAPPNQVQGQAQAPGGGMLRLQNPGANPQLRSLLLSQQPQGGMQGMQGMHPIQQMVHAAPGGGAQMQPQWRQPHQGPLMVPTGPRGPVTQNPGMPSVSSVMEDEILMDLI.

2 disordered regions span residues alanine 277 to glutamine 388 and alanine 580 to alanine 617. The segment covering alanine 286–proline 306 has biased composition (polar residues). Composition is skewed to low complexity over residues proline 314 to glutamine 367 and alanine 593 to alanine 604. The LXXLL motif signature appears at leucine 621–leucine 625. Residues alanine 650 to serine 689 are disordered. Over residues valine 679–serine 689 the composition is skewed to polar residues.

Belongs to the Mediator complex subunit 25 family. Component of the Mediator complex.

The protein resides in the nucleus. Component of the Mediator complex, a coactivator involved in the regulated transcription of nearly all RNA polymerase II-dependent genes. Mediator functions as a bridge to convey information from gene-specific regulatory proteins to the basal RNA polymerase II transcription machinery. Mediator is recruited to promoters by direct interactions with regulatory proteins and serves as a scaffold for the assembly of a functional preinitiation complex with RNA polymerase II and the general transcription factors. The polypeptide is Mediator of RNA polymerase II transcription subunit 25 (med25) (Danio rerio (Zebrafish)).